Here is a 361-residue protein sequence, read N- to C-terminus: Phospho-N-acetylmuramoyl-pentapeptide-transferase (361 aa).

The next 10 helical transmembrane spans lie at Leu-28–Phe-48, Ile-70–Leu-90, Leu-94–Ala-114, Val-129–Leu-149, Leu-169–Ser-189, Pro-205–Phe-225, Met-237–Phe-257, Ile-264–Ile-284, Ile-289–Val-309, and Thr-338–Leu-358.

Belongs to the glycosyltransferase 4 family. MraY subfamily. Mg(2+) is required as a cofactor.

The protein resides in the cell inner membrane. The catalysed reaction is UDP-N-acetyl-alpha-D-muramoyl-L-alanyl-gamma-D-glutamyl-meso-2,6-diaminopimeloyl-D-alanyl-D-alanine + di-trans,octa-cis-undecaprenyl phosphate = di-trans,octa-cis-undecaprenyl diphospho-N-acetyl-alpha-D-muramoyl-L-alanyl-D-glutamyl-meso-2,6-diaminopimeloyl-D-alanyl-D-alanine + UMP. The protein operates within cell wall biogenesis; peptidoglycan biosynthesis. Catalyzes the initial step of the lipid cycle reactions in the biosynthesis of the cell wall peptidoglycan: transfers peptidoglycan precursor phospho-MurNAc-pentapeptide from UDP-MurNAc-pentapeptide onto the lipid carrier undecaprenyl phosphate, yielding undecaprenyl-pyrophosphoryl-MurNAc-pentapeptide, known as lipid I. The chain is Phospho-N-acetylmuramoyl-pentapeptide-transferase from Pelagibacter ubique (strain HTCC1062).